Here is a 505-residue protein sequence, read N- to C-terminus: Deoxyguanosinetriphosphate triphosphohydrolase (505 aa).

Positions Arg66–Cys273 constitute an HD domain.

This sequence belongs to the dGTPase family. Type 1 subfamily. Homotetramer. Mg(2+) serves as cofactor.

The enzyme catalyses dGTP + H2O = 2'-deoxyguanosine + triphosphate + H(+). Functionally, dGTPase preferentially hydrolyzes dGTP over the other canonical NTPs. The chain is Deoxyguanosinetriphosphate triphosphohydrolase from Salmonella arizonae (strain ATCC BAA-731 / CDC346-86 / RSK2980).